Here is a 216-residue protein sequence, read N- to C-terminus: Homologous-pairing protein 2 (216 aa).

The protein belongs to the HOP2 family. As to quaternary structure, interacts with mcp7.

It localises to the nucleus. Required for proper homologous pairing and efficient cross-over and intragenic recombination during meiosis. Acts indirectly in a process facilitating homologous recombination. Acts during mid- to late-horse-tail period. In Schizosaccharomyces pombe (strain 972 / ATCC 24843) (Fission yeast), this protein is Homologous-pairing protein 2 (meu13).